The sequence spans 157 residues: N-acetylgalactosamine-specific phosphotransferase enzyme IIB component 2 (157 aa).

A PTS EIIB type-4 domain is found at 1-157; that stretch reads MPNIVLSRID…EPAVDLFKLL (157 aa). H15 functions as the Pros-phosphohistidine intermediate in the catalytic mechanism.

The protein resides in the cytoplasm. The phosphoenolpyruvate-dependent sugar phosphotransferase system (sugar PTS), a major carbohydrate active -transport system, catalyzes the phosphorylation of incoming sugar substrates concomitantly with their translocation across the cell membrane. This system is involved in N-acetylgalactosamine transport. This chain is N-acetylgalactosamine-specific phosphotransferase enzyme IIB component 2 (agaV), found in Escherichia coli (strain K12).